The following is a 247-amino-acid chain: ATP synthase subunit a, chloroplastic (247 aa).

5 helical membrane passes run 38–58 (QVLI…ILII), 95–115 (VPFI…GALL), 134–154 (INTT…AGLS), 199–219 (LVVV…VMFL), and 220–240 (GLFT…AYIG).

Belongs to the ATPase A chain family. As to quaternary structure, F-type ATPases have 2 components, CF(1) - the catalytic core - and CF(0) - the membrane proton channel. CF(1) has five subunits: alpha(3), beta(3), gamma(1), delta(1), epsilon(1). CF(0) has four main subunits: a, b, b' and c.

The protein resides in the plastid. It is found in the chloroplast thylakoid membrane. Key component of the proton channel; it plays a direct role in the translocation of protons across the membrane. The protein is ATP synthase subunit a, chloroplastic of Glycine max (Soybean).